Here is a 159-residue protein sequence, read N- to C-terminus: Transmembrane protein 92 (159 aa).

The first 26 residues, 1 to 26 (MSQAWVPGLAPTLLFSLLAGPQKIAA), serve as a signal peptide directing secretion. The Extracellular portion of the chain corresponds to 27-57 (KCGLILACPKGFKCCGDSCCQENELFPGPVR). The helical transmembrane segment at 58–78 (IFVIIFLVILSVFCICGLAKC) threads the bilayer. Residues 79-159 (FCRNCREPEP…DQRGIDNPAF (81 aa)) are Cytoplasmic-facing. The segment at 122-159 (EVILKPSLGPTPTEPPPPYSFRPEEYTGDQRGIDNPAF) is disordered.

It is found in the membrane. The protein is Transmembrane protein 92 (TMEM92) of Homo sapiens (Human).